A 490-amino-acid chain; its full sequence is Aspartyl/glutamyl-tRNA(Asn/Gln) amidotransferase subunit B (490 aa).

Belongs to the GatB/GatE family. GatB subfamily. In terms of assembly, heterotrimer of A, B and C subunits.

The catalysed reaction is L-glutamyl-tRNA(Gln) + L-glutamine + ATP + H2O = L-glutaminyl-tRNA(Gln) + L-glutamate + ADP + phosphate + H(+). The enzyme catalyses L-aspartyl-tRNA(Asn) + L-glutamine + ATP + H2O = L-asparaginyl-tRNA(Asn) + L-glutamate + ADP + phosphate + 2 H(+). Its function is as follows. Allows the formation of correctly charged Asn-tRNA(Asn) or Gln-tRNA(Gln) through the transamidation of misacylated Asp-tRNA(Asn) or Glu-tRNA(Gln) in organisms which lack either or both of asparaginyl-tRNA or glutaminyl-tRNA synthetases. The reaction takes place in the presence of glutamine and ATP through an activated phospho-Asp-tRNA(Asn) or phospho-Glu-tRNA(Gln). This is Aspartyl/glutamyl-tRNA(Asn/Gln) amidotransferase subunit B from Prochlorococcus marinus (strain MIT 9312).